The sequence spans 112 residues: Large ribosomal subunit protein uL22 (112 aa).

It belongs to the universal ribosomal protein uL22 family. In terms of assembly, part of the 50S ribosomal subunit.

Its function is as follows. This protein binds specifically to 23S rRNA; its binding is stimulated by other ribosomal proteins, e.g. L4, L17, and L20. It is important during the early stages of 50S assembly. It makes multiple contacts with different domains of the 23S rRNA in the assembled 50S subunit and ribosome. Functionally, the globular domain of the protein is located near the polypeptide exit tunnel on the outside of the subunit, while an extended beta-hairpin is found that lines the wall of the exit tunnel in the center of the 70S ribosome. The sequence is that of Large ribosomal subunit protein uL22 from Lawsonia intracellularis (strain PHE/MN1-00).